Reading from the N-terminus, the 233-residue chain is EDDIEADHVGVYGTTVYQSPGDIGQYTHEFDGDEWFYVDLDKKETIWMLPEFGQLTSFDPQGGLQNIATGKYTLGILTKRSNSTPATNEAPQATVFPKSPVLLGQPNTLICFVDNIFPPVINITWLRNSKSVTDGVYETSFLVNRDHSFHKLSYLTFIPSDDDIYDCKVEHWGLEEPVLKHWEPEIPAPMSELTETVVCALGLSVGLVGIVVGTIFIIQGLRSGGTSRHPGPL.

An alpha-1 region spans residues 1–88; the sequence is EDDIEADHVG…KRSNSTPATN (88 aa). At 1 to 195 the chain is on the extracellular side; it reads EDDIEADHVG…IPAPMSELTE (195 aa). Residues 89–182 are alpha-2; sequence EAPQATVFPK…GLEEPVLKHW (94 aa). In terms of domain architecture, Ig-like C1-type spans 91–183; it reads PQATVFPKSP…LEEPVLKHWE (93 aa). The cysteines at positions 111 and 167 are disulfide-linked. A glycan (N-linked (GlcNAc...) asparagine) is linked at Asn-122. Residues 183–195 are connecting peptide; that stretch reads EPEIPAPMSELTE. A helical transmembrane segment spans residues 196–221; it reads TVVCALGLSVGLVGIVVGTIFIIQGL. The Cytoplasmic segment spans residues 222–233; the sequence is RSGGTSRHPGPL.

It belongs to the MHC class II family.

It localises to the membrane. The sequence is that of H-2 class II histocompatibility antigen, A-S alpha chain (H2-Aa) from Mus musculus (Mouse).